We begin with the raw amino-acid sequence, 162 residues long: UPF0114 protein PST_0950 (162 aa).

3 helical membrane passes run 15–35, 53–73, and 136–156; these read LLAP…IKFF, LVLT…LVMV, and LMWY…MGYM.

The protein belongs to the UPF0114 family.

The protein resides in the cell membrane. The polypeptide is UPF0114 protein PST_0950 (Stutzerimonas stutzeri (strain A1501) (Pseudomonas stutzeri)).